A 273-amino-acid chain; its full sequence is 4-hydroxy-tetrahydrodipicolinate reductase (273 aa).

Residues 12–17 (GAGGRM) and Glu38 each bind NAD(+). Arg39 provides a ligand contact to NADP(+). Residues 102–104 (GTT) and 126–129 (AANF) contribute to the NAD(+) site. The active-site Proton donor/acceptor is His159. His160 contacts (S)-2,3,4,5-tetrahydrodipicolinate. Lys163 functions as the Proton donor in the catalytic mechanism. 169–170 (GT) contacts (S)-2,3,4,5-tetrahydrodipicolinate.

This sequence belongs to the DapB family. As to quaternary structure, homotetramer.

It is found in the cytoplasm. The enzyme catalyses (S)-2,3,4,5-tetrahydrodipicolinate + NAD(+) + H2O = (2S,4S)-4-hydroxy-2,3,4,5-tetrahydrodipicolinate + NADH + H(+). It catalyses the reaction (S)-2,3,4,5-tetrahydrodipicolinate + NADP(+) + H2O = (2S,4S)-4-hydroxy-2,3,4,5-tetrahydrodipicolinate + NADPH + H(+). The protein operates within amino-acid biosynthesis; L-lysine biosynthesis via DAP pathway; (S)-tetrahydrodipicolinate from L-aspartate: step 4/4. Its function is as follows. Catalyzes the conversion of 4-hydroxy-tetrahydrodipicolinate (HTPA) to tetrahydrodipicolinate. The polypeptide is 4-hydroxy-tetrahydrodipicolinate reductase (Pectobacterium atrosepticum (strain SCRI 1043 / ATCC BAA-672) (Erwinia carotovora subsp. atroseptica)).